The primary structure comprises 162 residues: Crossover junction endodeoxyribonuclease RuvC (162 aa).

Active-site residues include D8, E69, and H141. D8, E69, and H141 together coordinate Mg(2+).

It belongs to the RuvC family. As to quaternary structure, homodimer which binds Holliday junction (HJ) DNA. The HJ becomes 2-fold symmetrical on binding to RuvC with unstacked arms; it has a different conformation from HJ DNA in complex with RuvA. In the full resolvosome a probable DNA-RuvA(4)-RuvB(12)-RuvC(2) complex forms which resolves the HJ. Mg(2+) is required as a cofactor.

Its subcellular location is the cytoplasm. It catalyses the reaction Endonucleolytic cleavage at a junction such as a reciprocal single-stranded crossover between two homologous DNA duplexes (Holliday junction).. The RuvA-RuvB-RuvC complex processes Holliday junction (HJ) DNA during genetic recombination and DNA repair. Endonuclease that resolves HJ intermediates. Cleaves cruciform DNA by making single-stranded nicks across the HJ at symmetrical positions within the homologous arms, yielding a 5'-phosphate and a 3'-hydroxyl group; requires a central core of homology in the junction. The consensus cleavage sequence is 5'-(A/T)TT(C/G)-3'. Cleavage occurs on the 3'-side of the TT dinucleotide at the point of strand exchange. HJ branch migration catalyzed by RuvA-RuvB allows RuvC to scan DNA until it finds its consensus sequence, where it cleaves and resolves the cruciform DNA. This Wolbachia sp. subsp. Brugia malayi (strain TRS) protein is Crossover junction endodeoxyribonuclease RuvC.